Here is a 734-residue protein sequence, read N- to C-terminus: 1,4-alpha-glucan branching enzyme GlgB (734 aa).

Catalysis depends on aspartate 413, which acts as the Nucleophile. The Proton donor role is filled by glutamate 466.

The protein belongs to the glycosyl hydrolase 13 family. GlgB subfamily. In terms of assembly, monomer.

It carries out the reaction Transfers a segment of a (1-&gt;4)-alpha-D-glucan chain to a primary hydroxy group in a similar glucan chain.. It participates in glycan biosynthesis; glycogen biosynthesis. Its function is as follows. Catalyzes the formation of the alpha-1,6-glucosidic linkages in glycogen by scission of a 1,4-alpha-linked oligosaccharide from growing alpha-1,4-glucan chains and the subsequent attachment of the oligosaccharide to the alpha-1,6 position. The polypeptide is 1,4-alpha-glucan branching enzyme GlgB (Nitrosomonas europaea (strain ATCC 19718 / CIP 103999 / KCTC 2705 / NBRC 14298)).